Consider the following 745-residue polypeptide: 5-methyltetrahydropteroyltriglutamate--homocysteine methyltransferase (745 aa).

Residues lysine 19 and asparagine 115 each contribute to the 5-methyltetrahydropteroyltri-L-glutamate site. Residues isoleucine 420–serine 422 and glutamate 473 each bind L-homocysteine. Residues isoleucine 420–serine 422 and glutamate 473 each bind L-methionine. Residues aspartate 478, tyrosine 501, arginine 504–alanine 505, and tryptophan 550 contribute to the 5-methyltetrahydropteroyltri-L-glutamate site. Residue aspartate 588 participates in L-homocysteine binding. An L-methionine-binding site is contributed by aspartate 588. Histidine 630, cysteine 632, and glutamate 654 together coordinate Zn(2+). Catalysis depends on histidine 683, which acts as the Proton donor. Cysteine 715 is a binding site for Zn(2+).

It belongs to the vitamin-B12 independent methionine synthase family. Requires Zn(2+) as cofactor.

The catalysed reaction is 5-methyltetrahydropteroyltri-L-glutamate + L-homocysteine = tetrahydropteroyltri-L-glutamate + L-methionine. Its pathway is amino-acid biosynthesis; L-methionine biosynthesis via de novo pathway; L-methionine from L-homocysteine (MetE route): step 1/1. Its function is as follows. Catalyzes the transfer of a methyl group from 5-methyltetrahydrofolate to homocysteine resulting in methionine formation. In Streptococcus mutans serotype c (strain ATCC 700610 / UA159), this protein is 5-methyltetrahydropteroyltriglutamate--homocysteine methyltransferase.